A 284-amino-acid chain; its full sequence is P2R1A-PPP2R2A-interacting phosphatase regulator 1 (284 aa).

The tract at residues 1 to 65 is disordered; that stretch reads MAQEKMELDL…RRNSTTFPSR (65 aa). The span at 20-29 shows a compositional bias: gly residues; it reads EGGGPGGGGL. The residue at position 32 (serine 32) is a Phosphoserine. Serine 34 carries the post-translational modification Phosphoserine; by CHEK1. Residues serine 42, serine 45, serine 59, and serine 73 each carry the phosphoserine modification. A Glycyl lysine isopeptide (Lys-Gly) (interchain with G-Cter in SUMO1) cross-link involves residue lysine 86. Phosphoserine is present on residues serine 140 and serine 144. Threonine 146 carries the phosphothreonine modification. Residues 164–185 are disordered; the sequence is SNGLPPSPIPSPTTRFTTRRSQ. Positions 175 to 185 are enriched in low complexity; that stretch reads PTTRFTTRRSQ. 2 positions are modified to phosphoserine: serine 184 and serine 186. The segment at 233–284 is disordered; sequence GVCVSSDTLDGNSSSAGSSCNSPAKVSTTTDSPVSPAQAASPFIPVDELSSK. Low complexity predominate over residues 243–254; that stretch reads GNSSSAGSSCNS. The segment covering 256–267 has biased composition (polar residues); it reads AKVSTTTDSPVS. 3 positions are modified to phosphoserine: serine 264, serine 267, and serine 273.

This sequence belongs to the FAM122 family. Interacts with PPP2CA and PPP2R1A. Interacts (via its N-terminus) with PPP2R2A; the interaction is direct and this interaction inhibits PP2A activity. The CHEK1-mediated Ser-34 phosphorylated form interacts with 14-3-3 proteins. In terms of processing, CHEK1-mediated phosphorylation at Ser-34 negatively regulates its ability to inhibit serine/threonine-protein phosphatase 2A (PP2A) activity. Phosphorylation leads to its release from the PP2A complex and its sequestration by 14-3-3 proteins in the cytoplasm resulting in its inability to translocate to the nucleus, where it otherwise inhibits PP2A.

Its subcellular location is the nucleus. It localises to the cytoplasm. In terms of biological role, acts as an inhibitor of serine/threonine-protein phosphatase 2A (PP2A) activity. Inhibits PP2A activity by blocking the substrate binding site on PPP2R2A and the active site of PPP2CA. Potentiates ubiquitin-mediated proteasomal degradation of serine/threonine-protein phosphatase 2A catalytic subunit alpha (PPP2CA). Inhibits PP2A-mediated dephosphorylation of WEE1, promoting ubiquitin-mediated proteolysis of WEE1, thereby releasing G2/M checkpoint. The chain is P2R1A-PPP2R2A-interacting phosphatase regulator 1 from Mus musculus (Mouse).